A 249-amino-acid chain; its full sequence is Methylthioribulose-1-phosphate dehydratase (249 aa).

Residue C102 participates in substrate binding. Residues H120 and H122 each contribute to the Zn(2+) site. E148 serves as the catalytic Proton donor/acceptor. H205 is a Zn(2+) binding site.

The protein belongs to the aldolase class II family. MtnB subfamily. Zn(2+) is required as a cofactor.

Its subcellular location is the cytoplasm. The catalysed reaction is 5-(methylsulfanyl)-D-ribulose 1-phosphate = 5-methylsulfanyl-2,3-dioxopentyl phosphate + H2O. It functions in the pathway amino-acid biosynthesis; L-methionine biosynthesis via salvage pathway; L-methionine from S-methyl-5-thio-alpha-D-ribose 1-phosphate: step 2/6. In terms of biological role, catalyzes the dehydration of methylthioribulose-1-phosphate (MTRu-1-P) into 2,3-diketo-5-methylthiopentyl-1-phosphate (DK-MTP-1-P). The protein is Methylthioribulose-1-phosphate dehydratase of Botryotinia fuckeliana (strain B05.10) (Noble rot fungus).